The sequence spans 334 residues: Probable 2-ketogluconate reductase (334 aa).

NAD(+) contacts are provided by residues 164 to 165, 244 to 246, and aspartate 270; these read RI and AGR. The active site involves arginine 246. Glutamate 275 is an active-site residue. Histidine 294 functions as the Proton donor in the catalytic mechanism. 294–297 serves as a coordination point for NAD(+); the sequence is HIGT.

This sequence belongs to the D-isomer specific 2-hydroxyacid dehydrogenase family.

The protein localises to the cytoplasm. The catalysed reaction is D-gluconate + NADP(+) = 2-dehydro-D-gluconate + NADPH + H(+). Functionally, catalyzes the NADPH-dependent reduction of 2,5-diketo-D-gluconate (25DKG) to 5-keto-D-gluconate (5KDG), 2-keto-D-gluconate (2KDG) to D-gluconate, and 2-keto-L-gulonate (2KLG) to L-idonate (IA). This chain is Probable 2-ketogluconate reductase (tkrA), found in Dictyostelium discoideum (Social amoeba).